A 584-amino-acid chain; its full sequence is Keratin, type I cytoskeletal 10 (584 aa).

The span at 1–15 (MSVRYSSSKHYSSSR) shows a compositional bias: low complexity. Residues 1–24 (MSVRYSSSKHYSSSRSGGGGGGGG) are disordered. A head region spans residues 1–145 (MSVRYSSSKH…GGDGGLLSGN (145 aa)). 6 positions are modified to phosphoserine: Ser14, Ser16, Ser42, Ser53, Ser56, and Ser170. A coil 1A region spans residues 146–181 (EKVTMQNLNDRLASYLDKVRALEESNYELEGKIKEW). One can recognise an IF rod domain in the interval 146–460 (EKVTMQNLND…SLLEGEGSSG (315 aa)). A linker 1 region spans residues 182 to 202 (YEKHGNSHQGEPRDYSKYYKT). A coil 1B region spans residues 203–294 (IDDLKNQILN…KNHEEEMKDL (92 aa)). The segment at 295-317 (RNVSTGDVNVEMNAAPGVDLTQL) is linker 12. Positions 318-456 (LNNMRSQYEQ…QTYRSLLEGE (139 aa)) are coil 2. Positions 453–584 (LEGEGSSGGG…GESSSKGPRY (132 aa)) are disordered. Gly residues predominate over residues 457–563 (GSSGGGGRGG…GGGYGGGSSS (107 aa)). Residues 457-584 (GSSGGGGRGG…GESSSKGPRY (128 aa)) are tail. Positions 564–584 (GGHKSSSSGSVGESSSKGPRY) are enriched in low complexity.

It belongs to the intermediate filament family. In terms of assembly, heterotetramer of two type I and two type II keratins. Heterodimer with KRT1. Two heterodimers of KRT1 and KRT10 form a heterotetramer. The KRT10 subunit in the heterotetramer is probably disulfide-linked. Interacts with PLEC isoform 1C, when in a heterodimer with KRT1. (Microbial infection) Interacts (via C-terminal tail domain) with the S.aureus clumping factor, clfB; this interaction probably mediates S.aureus attachment to the keratinized squamous epithelial cells from the nasal cavity. As to quaternary structure, (Microbial infection) Interacts (via the C-terminal tail domain) with S.pneumoniae serine-rich repeat protein PsrP; this interaction probably mediates S.pneumoniae adherence to lung tissue and subsequent pathogenesis. Neither protein has to be glycosylated for the interaction to occur. As to expression, seen in all suprabasal cell layers including stratum corneum. Expressed on the surface of lung cell lines. Localized on the surface of desquamated nasal epithelial cells (at protein level).

It is found in the secreted. The protein resides in the extracellular space. Its subcellular location is the cell surface. It localises to the cytoplasm. Functionally, plays a role in the establishment of the epidermal barrier on plantar skin. Involved in the maintenance of cell layer development and keratin filament bundles in suprabasal cells of the epithelium. Its function is as follows. (Microbial infection) Acts as a mediator of S.aureus adherence to desquamated nasal epithelial cells via clfB, and hence may play a role in nasal colonization. (Microbial infection) Binds S.pneumoniae PsrP, mediating adherence of the bacteria to lung cell lines. Reduction of levels of KRT10 keratin decrease adherence, overexpression increases adherence. Neither protein has to be glycosylated for the interaction to occur. The sequence is that of Keratin, type I cytoskeletal 10 (KRT10) from Homo sapiens (Human).